We begin with the raw amino-acid sequence, 485 residues long: Subtilisin-like protease 1 (485 aa).

The first 19 residues, 1–19, serve as a signal peptide directing secretion; sequence MGIFRFISISLAAVSAANA. Positions 20–116 are excised as a propeptide; sequence GHILSMGHAK…VEPDTTITIH (97 aa). Residues 34–116 form the Inhibitor I9 domain; it reads SYIVVMKDGT…VEPDTTITIH (83 aa). One can recognise a Peptidase S8 domain in the interval 126-400; sequence SWGLARISSQ…NILINNGDAK (275 aa). Residues Asp158 and His190 each act as charge relay system in the active site. The N-linked (GlcNAc...) asparagine glycan is linked to Asn251. Catalysis depends on Ser345, which acts as the Charge relay system. Residues 377–394 show a composition bias toward polar residues; it reads GTSSVTNPGPGTRTNILI. Positions 377 to 462 are disordered; the sequence is GTSSVTNPGP…HTPFPNDDFN (86 aa). Residues 409–418 are compositionally biased toward pro residues; sequence PSQPPKPSQP. The span at 419–428 shows a compositional bias: low complexity; sequence SKPQQPSEPQ. The segment covering 433-455 has biased composition (pro residues); that stretch reads PQEPAPGQPAPAPAPVPQHPHTP.

This sequence belongs to the peptidase S8 family.

The protein resides in the secreted. In terms of biological role, secreted subtilisin-like serine protease with keratinolytic activity that contributes to pathogenicity. The sequence is that of Subtilisin-like protease 1 (SUB1) from Arthroderma otae (Microsporum canis).